The primary structure comprises 170 residues: ATP synthase subunit b (170 aa).

A helical membrane pass occupies residues 15-37; that stretch reads LNLFETNVLNWAVVVFGLYKFLP.

The protein belongs to the ATPase B chain family. F-type ATPases have 2 components, F(1) - the catalytic core - and F(0) - the membrane proton channel. F(1) has five subunits: alpha(3), beta(3), gamma(1), delta(1), epsilon(1). F(0) has four main subunits: a(1), b(1), b'(1) and c(10-14). The alpha and beta chains form an alternating ring which encloses part of the gamma chain. F(1) is attached to F(0) by a central stalk formed by the gamma and epsilon chains, while a peripheral stalk is formed by the delta, b and b' chains.

The protein resides in the cellular thylakoid membrane. F(1)F(0) ATP synthase produces ATP from ADP in the presence of a proton or sodium gradient. F-type ATPases consist of two structural domains, F(1) containing the extramembraneous catalytic core and F(0) containing the membrane proton channel, linked together by a central stalk and a peripheral stalk. During catalysis, ATP synthesis in the catalytic domain of F(1) is coupled via a rotary mechanism of the central stalk subunits to proton translocation. Functionally, component of the F(0) channel, it forms part of the peripheral stalk, linking F(1) to F(0). The protein is ATP synthase subunit b of Prochlorococcus marinus (strain MIT 9515).